The sequence spans 368 residues: DNA-dependent metalloprotease dvc-1 (368 aa).

A SprT-like domain is found at 21–190 (HALFIQFDAR…QSCGGNFLKV (170 aa)). His89 contributes to the Zn(2+) binding site. Glu90 is an active-site residue. 2 residues coordinate Zn(2+): His93 and His108. Residues 187–309 (FLKVKEPEGY…PVNFTSPSSA (123 aa)) are disordered. The segment covering 226-237 (TLDDFFKKDGKN) has biased composition (basic and acidic residues). Positions 238–274 (SSDNSTSKSPTKPSTSLFTGSGQKLGGSSSTSSLLNS) are enriched in low complexity. The segment at 344-368 (SVICPSCNTEVMENLIHGHLDYCLG) adopts a UBZ4-type zinc-finger fold. Zn(2+) contacts are provided by Cys347, Cys350, His362, and Cys366.

This sequence belongs to the Spartan family. In terms of assembly, interacts with vcp/p97 (cdc-48.1 or cdc-48.2).

The protein localises to the nucleus. It is found in the chromosome. Functionally, DNA-dependent metalloendopeptidase that mediates the proteolytic cleavage of covalent DNA-protein cross-links (DPCs) during DNA synthesis, thereby playing a key role in maintaining genomic integrity. DPCs are highly toxic DNA lesions that interfere with essential chromatin transactions, such as replication and transcription, and which are induced by reactive agents, such as UV light or formaldehyde. Associates with the DNA replication machinery and specifically removes DPCs during DNA synthesis. Regulator of UV-induced DNA damage response: required to protect genome stability during DNA replication, possibly via recruitment of vcp/p97 (cdc-48.1 or cdc-48.2) recruitment. In Caenorhabditis elegans, this protein is DNA-dependent metalloprotease dvc-1.